Here is a 912-residue protein sequence, read N- to C-terminus: DNA ligase 4 (912 aa).

ATP is bound by residues Glu271, Thr272, Lys273, Leu274, Arg278, Glu331, Lys345, Phe367, Glu427, Lys432, Lys449, and Lys451. The active-site N6-AMP-lysine intermediate is the Lys273. Glu331 is a Mg(2+) binding site. Glu427 is a Mg(2+) binding site. A required for catalytic activity region spans residues 610–620 (LATKHLHVGDD). BRCT domains lie at 654–743 (KVSN…PRFM) and 846–912 (LRFH…QYLL).

It belongs to the ATP-dependent DNA ligase family. Interacts with XRCC4; the LIG4-XRCC4 subcomplex has a 1:2 stoichiometry and XRCC4 is required for LIG4 stability. Component of the core long-range non-homologous end joining (NHEJ) complex (also named DNA-PK complex) composed of PRKDC, LIG4, XRCC4, XRCC6/Ku70, XRCC5/Ku86 and NHEJ1/XLF. Additional component of the NHEJ complex includes PAXX. Following autophosphorylation, PRKDC dissociates from DNA, leading to formation of the short-range NHEJ complex, composed of LIG4, XRCC4, XRCC6/Ku70, XRCC5/Ku86 and NHEJ1/XLF. Interacts with DCLRE1C; the interaction is direct. Interacts with APLF. The cofactor is Mg(2+).

It is found in the nucleus. It carries out the reaction ATP + (deoxyribonucleotide)n-3'-hydroxyl + 5'-phospho-(deoxyribonucleotide)m = (deoxyribonucleotide)n+m + AMP + diphosphate.. In terms of biological role, DNA ligase involved in DNA non-homologous end joining (NHEJ); required for double-strand break (DSB) repair and V(D)J recombination. Catalyzes the NHEJ ligation step of the broken DNA during DSB repair by resealing the DNA breaks after the gap filling is completed. Joins single-strand breaks in a double-stranded polydeoxynucleotide in an ATP-dependent reaction. LIG4 is mechanistically flexible: it can ligate nicks as well as compatible DNA overhangs alone, while in the presence of XRCC4, it can ligate ends with 2-nucleotides (nt) microhomology and 1-nt gaps. Forms a subcomplex with XRCC4; the LIG4-XRCC4 subcomplex is responsible for the NHEJ ligation step and XRCC4 enhances the joining activity of LIG4. Binding of the LIG4-XRCC4 complex to DNA ends is dependent on the assembly of the DNA-dependent protein kinase complex DNA-PK to these DNA ends. LIG4 regulates nuclear localization of XRCC4. This is DNA ligase 4 from Cricetulus griseus (Chinese hamster).